The chain runs to 170 residues: ATP synthase subunit b (170 aa).

A helical transmembrane segment spans residues 30–50 (FFFVLAIFLVVLGVIGTFVVP).

Belongs to the ATPase B chain family. As to quaternary structure, F-type ATPases have 2 components, F(1) - the catalytic core - and F(0) - the membrane proton channel. F(1) has five subunits: alpha(3), beta(3), gamma(1), delta(1), epsilon(1). F(0) has three main subunits: a(1), b(2) and c(10-14). The alpha and beta chains form an alternating ring which encloses part of the gamma chain. F(1) is attached to F(0) by a central stalk formed by the gamma and epsilon chains, while a peripheral stalk is formed by the delta and b chains.

It localises to the cell membrane. F(1)F(0) ATP synthase produces ATP from ADP in the presence of a proton or sodium gradient. F-type ATPases consist of two structural domains, F(1) containing the extramembraneous catalytic core and F(0) containing the membrane proton channel, linked together by a central stalk and a peripheral stalk. During catalysis, ATP synthesis in the catalytic domain of F(1) is coupled via a rotary mechanism of the central stalk subunits to proton translocation. Its function is as follows. Component of the F(0) channel, it forms part of the peripheral stalk, linking F(1) to F(0). This Mycobacterium leprae (strain TN) protein is ATP synthase subunit b.